Here is a 365-residue protein sequence, read N- to C-terminus: DNA replication and repair protein RecF (365 aa).

30-37 contributes to the ATP binding site; that stretch reads GPNGSGKT.

It belongs to the RecF family.

The protein resides in the cytoplasm. Its function is as follows. The RecF protein is involved in DNA metabolism; it is required for DNA replication and normal SOS inducibility. RecF binds preferentially to single-stranded, linear DNA. It also seems to bind ATP. This chain is DNA replication and repair protein RecF, found in Azotobacter vinelandii (strain DJ / ATCC BAA-1303).